The sequence spans 546 residues: Chaperonin GroEL (546 aa).

Residues 30-33 (TLGP), Lys-51, 87-91 (DGTTT), Gly-415, 479-481 (NAA), and Asp-495 contribute to the ATP site.

The protein belongs to the chaperonin (HSP60) family. As to quaternary structure, forms a cylinder of 14 subunits composed of two heptameric rings stacked back-to-back. Interacts with the co-chaperonin GroES.

The protein localises to the cytoplasm. It carries out the reaction ATP + H2O + a folded polypeptide = ADP + phosphate + an unfolded polypeptide.. Together with its co-chaperonin GroES, plays an essential role in assisting protein folding. The GroEL-GroES system forms a nano-cage that allows encapsulation of the non-native substrate proteins and provides a physical environment optimized to promote and accelerate protein folding. In Pseudomonas putida (strain ATCC 700007 / DSM 6899 / JCM 31910 / BCRC 17059 / LMG 24140 / F1), this protein is Chaperonin GroEL.